The following is a 106-amino-acid chain: Large ribosomal subunit protein eL42 (106 aa).

It belongs to the eukaryotic ribosomal protein eL42 family.

This Debaryomyces hansenii (strain ATCC 36239 / CBS 767 / BCRC 21394 / JCM 1990 / NBRC 0083 / IGC 2968) (Yeast) protein is Large ribosomal subunit protein eL42 (RPL44).